The chain runs to 213 residues: Phosphatidylserine decarboxylase proenzyme (213 aa).

Catalysis depends on Ser-182, which acts as the Schiff-base intermediate with substrate; via pyruvic acid. A Pyruvic acid (Ser); by autocatalysis modification is found at Ser-182.

The protein belongs to the phosphatidylserine decarboxylase family. PSD-A subfamily. In terms of assembly, heterodimer of a large membrane-associated beta subunit and a small pyruvoyl-containing alpha subunit. The cofactor is pyruvate. In terms of processing, is synthesized initially as an inactive proenzyme. Formation of the active enzyme involves a self-maturation process in which the active site pyruvoyl group is generated from an internal serine residue via an autocatalytic post-translational modification. Two non-identical subunits are generated from the proenzyme in this reaction, and the pyruvate is formed at the N-terminus of the alpha chain, which is derived from the carboxyl end of the proenzyme. The post-translation cleavage follows an unusual pathway, termed non-hydrolytic serinolysis, in which the side chain hydroxyl group of the serine supplies its oxygen atom to form the C-terminus of the beta chain, while the remainder of the serine residue undergoes an oxidative deamination to produce ammonia and the pyruvoyl prosthetic group on the alpha chain.

The protein localises to the cell membrane. It catalyses the reaction a 1,2-diacyl-sn-glycero-3-phospho-L-serine + H(+) = a 1,2-diacyl-sn-glycero-3-phosphoethanolamine + CO2. It participates in phospholipid metabolism; phosphatidylethanolamine biosynthesis; phosphatidylethanolamine from CDP-diacylglycerol: step 2/2. Its function is as follows. Catalyzes the formation of phosphatidylethanolamine (PtdEtn) from phosphatidylserine (PtdSer). This Chlorobium phaeobacteroides (strain BS1) protein is Phosphatidylserine decarboxylase proenzyme.